We begin with the raw amino-acid sequence, 1023 residues long: NLR family CARD domain-containing protein 4 (1023 aa).

The region spanning 1–88 (MNFIKENSQA…PVYQDLTGHS (88 aa)) is the CARD domain. Positions 95 to 298 (EEDLDVLAQS…HVGALTVEVG (204 aa)) are nucleotide-binding domain (NBD). Residues 163-476 (SPCLIEGESG…VSKGNSYLKK (314 aa)) form the NACHT domain. 169 to 176 (GESGKGKS) contacts ATP. The tract at residues 356–463 (AHTQTMLFQT…RLSSLLKSRE (108 aa)) is winged-helix domain (WHD). Position 533 is a phosphoserine (serine 533). 12 LRR repeats span residues 578–598 (FFQGKSLYINSENIPDYLFDF), 655–678 (MQKFKTLEVTLRDISKLNKQDIKY), 734–757 (VTDLQNLSIHDLHTQRLPGGLADS), 761–784 (LKNLLKLILDDIRLNEEDAKSLAE), 786–811 (LRNLKKMRLLHLTRLSDMGEGMDYIV), 823–846 (EMKLVDCCLTANSLKILAQNLHNL), 847–869 (VKLSVLDMSENYLEKAGSEALQG), 877–901 (LEQLSALMLPWCWDAYISLPNLLKQ), 910–932 (KLGLKNWRLRDEEIRSFGEFLEM), 935–962 (LRDLQQLDLAGHGVSSDGWLSFMDVFEN), 964–984 (KQLVFFDFGTEEFLPDAALVR), and 998–1020 (EARLTGWELDDYDISVIKGTFKL).

As to quaternary structure, homooligomer; homooligomerizes following activation of Naip proteins by pathogenic proteins such as S.typhimurium (Salmonella) flagellin or PrgJ. Component of the NLRC4 inflammasome, at least composed of NLRC4, caspase-1 (CASP1) and some NAIP family member. Interacts with EIF2AK2/PKR. Post-translationally, phosphorylated at Ser-533 following infection of macrophages with S.typhimurium (Salmonella). Phosphorylation is essential for NLRC4 inflammasome function to promote caspase-1 activation and pyroptosis. PRKCD phosphorylates Ser-533 in vitro.

The protein resides in the cytoplasm. The protein localises to the cytosol. Functionally, key component of inflammasomes that indirectly senses specific proteins from pathogenic bacteria and fungi and responds by assembling an inflammasome complex that promotes caspase-1 activation, cytokine production and macrophage pyroptosis. The NLRC4 inflammasome is activated as part of the innate immune response to a range of intracellular bacteria. The protein is NLR family CARD domain-containing protein 4 (Nlrc4) of Rattus norvegicus (Rat).